Here is a 341-residue protein sequence, read N- to C-terminus: Retinol dehydrogenase 10 (341 aa).

The helical; Signal-anchor transmembrane segment at 3 to 23 (IVVEFFVVTFKVLWAFVLAAA) threads the bilayer. 40 to 64 (LITGAGSGLGRLFALEFARRRALLV) is a binding site for NADP(+). Substrate is bound at residue Ser-197. Tyr-210 acts as the Proton acceptor in catalysis.

It belongs to the short-chain dehydrogenases/reductases (SDR) family. As to expression, detected in retinal pigment epithelium (at protein level). Detected in retina, retinal pigment epithelium, and at lower levels in cornea, liver, kidney, pancreas, lung, brain and skeletal muscle.

The protein localises to the microsome membrane. The protein resides in the endoplasmic reticulum membrane. The enzyme catalyses all-trans-retinol + NADP(+) = all-trans-retinal + NADPH + H(+). The protein operates within cofactor metabolism; retinol metabolism. In terms of biological role, retinol dehydrogenase with a clear preference for NADP. Converts all-trans-retinol to all-trans-retinal. Has no detectable activity towards 11-cis-retinol, 9-cis-retinol and 13-cis-retinol. This is Retinol dehydrogenase 10 (RDH10) from Bos taurus (Bovine).